Reading from the N-terminus, the 83-residue chain is Small ribosomal subunit protein bS18 (83 aa).

This sequence belongs to the bacterial ribosomal protein bS18 family. Part of the 30S ribosomal subunit. Forms a tight heterodimer with protein bS6.

Binds as a heterodimer with protein bS6 to the central domain of the 16S rRNA, where it helps stabilize the platform of the 30S subunit. In Methylobacterium radiotolerans (strain ATCC 27329 / DSM 1819 / JCM 2831 / NBRC 15690 / NCIMB 10815 / 0-1), this protein is Small ribosomal subunit protein bS18.